A 410-amino-acid chain; its full sequence is MADSSGRGAGKPATGPTNSSSAKKKDKRVQGGRVIESRYLQYEKKTTQKAPAGDGSQTRGKMSEGGRKSSLLQKSKADSSGVGKGDLQSTLLEGHGTAPPDLDLSAINDKSIVKKTPQLAKTISKKPESTSFSAPRKKSPDLSEAMEMMESQTLLLTLLSVKMENNLAEFERRAEKNLLIMCKEKEKLQKKAHELKRRLLLSQRKRELADVLDAQIEMLSPFEAVATRFKEQYRTFATALDTTRHELPVRSIHLEGDGQQLLDALQHELVTTQRLLGELDVGDSEENVQVLDLLSELKDVTAKKDLELRRSFAQVLELSAEASKEAALANQEVWEETQGMAPPSRWYFNQDSACRESGGAPKNTPLSEDDNPGASSAPAQATFISPSEDFSSSSQAEVPPSLSRSGRDLS.

Residues 1–104 are disordered; sequence MADSSGRGAG…HGTAPPDLDL (104 aa). A2 carries the N-acetylalanine modification. Position 105 is a phosphoserine (S105). The tract at residues 118 to 143 is disordered; the sequence is QLAKTISKKPESTSFSAPRKKSPDLS. A coiled-coil region spans residues 156–208; that stretch reads LTLLSVKMENNLAEFERRAEKNLLIMCKEKEKLQKKAHELKRRLLLSQRKREL. The interval 353–410 is disordered; that stretch reads ACRESGGAPKNTPLSEDDNPGASSAPAQATFISPSEDFSSSSQAEVPPSLSRSGRDLS. The span at 373 to 384 shows a compositional bias: polar residues; that stretch reads GASSAPAQATFI. Positions 385-394 are enriched in low complexity; that stretch reads SPSEDFSSSS.

It belongs to the HAUS8 family. Component of the HAUS augmin-like complex. The complex interacts with the gamma-tubulin ring complex and this interaction is required for spindle assembly. Associates with microtubules. The interaction with microtubules is strong during mitosis, while it is weak or absent during interphase. It is unclear whether this interaction is direct or indirect. Interacts with EML3 (phosphorylated at 'Thr-881') and TUBG1.

It localises to the cytoplasm. It is found in the cytoskeleton. Its subcellular location is the microtubule organizing center. The protein resides in the centrosome. The protein localises to the spindle. It localises to the spindle pole. Functionally, contributes to mitotic spindle assembly, maintenance of centrosome integrity and completion of cytokinesis as part of the HAUS augmin-like complex. In Homo sapiens (Human), this protein is HAUS augmin-like complex subunit 8 (HAUS8).